A 512-amino-acid polypeptide reads, in one-letter code: MTLPEPLFRMEGISKRYGGAVALKDADIAIRPGAIHAVLGENGAGKSTLIKIMAGVVAPDEGRMLLDGKEIAFASPAAANAAGIVCVFQELSLIPDLSVADNIVISNPPLKFGMIDRRRQRRIAEEALARAGASDIHPSALVKDLPLSRRQMVEIAKALARKPRLMILDEATSALTQSDVEKVFTMLKRLRAEGMALIYISHRMHEIAQLADECTVFRNGRSIESYPAGTKTDQQVVELMIGREYSNVFPPKPAHRGEVMPVLSCRDLSWGDRLSGITFDIRPGEIIGVGGLDGQGQRELLLALFGVLRDVKGEVVIDGRPVTLKSPRDAKSGGISMALIPEDRKTEGLMLPMTVRENLSIAALDRVSRNGVIDRAAERREIDDLFKLLAIKAATIDMPVAALSGGNQQKVVIAKWLMNRPRIILLNDPTRGIDVGTKQEIYLLLRKLADAGAAIIFYSTDYDELIGCCDRVLVMYDGSIIRQLEGAEINEHELIGAALNIAGDHAAQRIAP.

2 consecutive ABC transporter domains span residues 8–244 (FRME…IGRE) and 254–502 (AHRG…LNIA). 40–47 (GENGAGKS) contributes to the ATP binding site.

It belongs to the ABC transporter superfamily. Ribose importer (TC 3.A.1.2.1) family. The complex is composed of an ATP-binding protein (RbsA), two transmembrane proteins (RbsC) and a solute-binding protein (RbsB).

It is found in the cell inner membrane. It catalyses the reaction D-ribose(out) + ATP + H2O = D-ribose(in) + ADP + phosphate + H(+). Part of the ABC transporter complex RbsABC involved in ribose import. Responsible for energy coupling to the transport system. The protein is Ribose import ATP-binding protein RbsA 1 of Rhizobium johnstonii (strain DSM 114642 / LMG 32736 / 3841) (Rhizobium leguminosarum bv. viciae).